A 973-amino-acid chain; its full sequence is Short transient receptor potential channel 5 (973 aa).

At 1-325 (MAQLYYKKVN…YDGFPGWRRK (325 aa)) the chain is on the cytoplasmic side. ANK repeat units lie at residues 30–60 (SAEEKAFLNAVEKGDYATVKQALQEAEIYYN), 69–97 (LGRSALLIAIENENLEIMELLLNHSVYVG), 98–124 (DALLYAIRKEVVGAVELLLSYRRPSGE), and 141–170 (PDITPIMLAAHTNNYEIIKLLVQKRVTIPR). Zn(2+) is bound by residues H172, C176, C178, and C181. The discontinuously helical intramembrane region spans 326–360 (HWVVKLLTCMTIGFLFPMLSIAYLISPRSNLGLFI). Over 361 to 363 (KKP) the chain is Cytoplasmic. Residues 364 to 384 (FIKFICHTASYLTFLFMLLLA) form a helical membrane-spanning segment. The Extracellular portion of the chain corresponds to 385-404 (SQHIVRTDLHVQGPPPTVVE). A helical membrane pass occupies residues 405–419 (WMILPWVLGFIWGEI). E418, E421, N436, and D439 together coordinate Ca(2+). Residues 420–433 (KEMWDGGFTEYIHD) are Cytoplasmic-facing. The helical transmembrane segment at 434-454 (WWNLMDFAMNSLYLATISLKI) threads the bilayer. Residues 455-476 (VAYVKYNGSRPREEWEMWHPTL) are Extracellular-facing. An N-linked (GlcNAc...) asparagine glycan is attached at N461. The chain crosses the membrane as a helical span at residues 477–497 (IAEALFAISNILSSLRLISLF). The Cytoplasmic portion of the chain corresponds to 498–512 (TANSHLGPLQISLGR). The helical transmembrane segment at 513 to 535 (MLLDILKFLFIYCLVLLAFANGL) threads the bilayer. The Extracellular portion of the chain corresponds to 536–603 (NQLYFYYETR…HEFTEFVGAT (68 aa)). C553 and C558 form a disulfide bridge. The helical transmembrane segment at 604–624 (MFGTYNVISLVVLLNMLIAMM) threads the bilayer. At 625 to 973 (NNSYQLIADH…GQEEQVTTRL (349 aa)) the chain is on the cytoplasmic side. Disordered stretches follow at residues 766–794 (HPRSFSTSSTELSQRDDNNDGSGGARAKS) and 810–837 (GPPLIRTMPRSSGAQGKSKAESSSKRSF). Residues 971–973 (TRL) are essential for binding to NHERF1 PDZ domain.

It belongs to the transient receptor (TC 1.A.4) family. STrpC subfamily. TRPC5 sub-subfamily. In terms of assembly, homotetramer. Heterotetramer with TRPC1 and/or TRPC4. Each subunit in the homomeric ion channel (via ANK repeats) interacts with one copy of GTP-bound GNAI3; the interaction is direct and activates the ion channel. Interacts with TRPC4AP. Interacts with NHERF1. Interacts with MX1 and RNF24. Interacts (via C-terminus) with CABP1. Interacts with SESTD1 (via the spectrin 1 repeat). Interacts with PLSCR1. Interacts with PKD2L2. As to expression, expressed in brain with higher levels in fetal brain. Found in cerebellum and occipital pole.

The protein localises to the cell membrane. The enzyme catalyses Ca(2+)(in) = Ca(2+)(out). Its activity is regulated as follows. Activated by G-protein coupled receptors via direct interaction with GTP-bound GNAI3, which increases the channel sensitivity to phosphatidylinositol bisphosphate. May be activated by intracellular calcium store depletion. Calcium channel activity is enhanced by MYLK, that promotes its subcellular localization at the plasma membrane. Functionally, forms a receptor-activated non-selective calcium permeant cation channel. Mediates calcium-dependent phosphatidylserine externalization and apoptosis in neurons via its association with PLSCR1. Acts on distinct neuronal populations in the hypothalamus to regulate innate behaviors including feeding, anxiety (flight/fight/fear), socialization, and maternal care. This chain is Short transient receptor potential channel 5 (TRPC5), found in Homo sapiens (Human).